The sequence spans 624 residues: uncharacterized protein (624 aa).

The segment at 108 to 138 (PTAWSGMESDSTASERSLPQRTDTTSVSSQY) is disordered. The residue at position 112 (Ser112) is a Phosphoserine. The segment covering 115–138 (ESDSTASERSLPQRTDTTSVSSQY) has biased composition (polar residues). Ser205 carries the post-translational modification Phosphoserine. Disordered stretches follow at residues 217–236 (LMES…PGTR) and 305–329 (KREC…PVSE).

This is an uncharacterized protein from Rattus norvegicus (Rat).